A 206-amino-acid polypeptide reads, in one-letter code: Small ribosomal subunit protein uS7 (206 aa).

Positions 1-19 are enriched in acidic residues; the sequence is MSAEDTPEADADAAEESEP. Residues 1 to 25 are disordered; it reads MSAEDTPEADADAAEESEPETARAK. Serine 2 carries the post-translational modification N-acetylserine.

Belongs to the universal ribosomal protein uS7 family. As to quaternary structure, part of the 30S ribosomal subunit.

Its function is as follows. One of the primary rRNA binding proteins, it binds directly to 16S rRNA where it nucleates assembly of the head domain of the 30S subunit. Is located at the subunit interface close to the decoding center. This is Small ribosomal subunit protein uS7 from Haloarcula marismortui (strain ATCC 43049 / DSM 3752 / JCM 8966 / VKM B-1809) (Halobacterium marismortui).